The following is a 386-amino-acid chain: Ribonucleoside-diphosphate reductase subunit M2 (386 aa).

At serine 20 the chain carries Phosphoserine. A Phosphothreonine modification is found at threonine 33. Residues 49-51 (RRI) carry the Cy motif. Fe cation-binding residues include aspartate 139, glutamate 170, and histidine 173. The active site involves tyrosine 177. Fe cation is bound by residues glutamate 233, glutamate 267, and histidine 270.

The protein belongs to the ribonucleoside diphosphate reductase small chain family. Heterodimer of a large and a small subunit. Interacts (via Cy motif and when phosphorylated at Thr-33) with CCNF; the interaction occurs exclusively in G2 and early M. Fe cation serves as cofactor. In terms of processing, phosphorylation on Ser-20 relieves the inhibitory effect on Wnt signaling. Phosphorylated on Thr-33 by CDK1 and CDK2; predominantly in G2 and M phase. Ubiquitinated by the SCF(CCNF) E3 ubiquitin-protein ligase complex; leading to its degradation by the proteasome.

The protein localises to the cytoplasm. The protein resides in the nucleus. The catalysed reaction is a 2'-deoxyribonucleoside 5'-diphosphate + [thioredoxin]-disulfide + H2O = a ribonucleoside 5'-diphosphate + [thioredoxin]-dithiol. Its function is as follows. Provides the precursors necessary for DNA synthesis. Catalyzes the biosynthesis of deoxyribonucleotides from the corresponding ribonucleotides. Inhibits Wnt signaling. This chain is Ribonucleoside-diphosphate reductase subunit M2 (RRM2), found in Mesocricetus auratus (Golden hamster).